The following is a 198-amino-acid chain: Probable chemoreceptor glutamine deamidase CheD (198 aa).

The protein belongs to the CheD family.

It catalyses the reaction L-glutaminyl-[protein] + H2O = L-glutamyl-[protein] + NH4(+). Its function is as follows. Probably deamidates glutamine residues to glutamate on methyl-accepting chemotaxis receptors (MCPs), playing an important role in chemotaxis. The polypeptide is Probable chemoreceptor glutamine deamidase CheD (Stenotrophomonas maltophilia (strain K279a)).